Here is a 137-residue protein sequence, read N- to C-terminus: Transcription antitermination protein NusB (137 aa).

It belongs to the NusB family.

In terms of biological role, involved in transcription antitermination. Required for transcription of ribosomal RNA (rRNA) genes. Binds specifically to the boxA antiterminator sequence of the ribosomal RNA (rrn) operons. In Aeromonas hydrophila subsp. hydrophila (strain ATCC 7966 / DSM 30187 / BCRC 13018 / CCUG 14551 / JCM 1027 / KCTC 2358 / NCIMB 9240 / NCTC 8049), this protein is Transcription antitermination protein NusB.